An 85-amino-acid polypeptide reads, in one-letter code: MKLTCVLIITVLFLTACQLTAAGNSRDKQEDPVVRSSGEVQRSEDIKLAKRCLESGSLCFAGYGHSSCCSGACLDYGGLGVGACR.

Residues 1 to 22 (MKLTCVLIITVLFLTACQLTAA) form the signal peptide. Positions 23–49 (GNSRDKQEDPVVRSSGEVQRSEDIKLA) are excised as a propeptide. Cystine bridges form between Cys52–Cys69, Cys59–Cys73, and Cys68–Cys84.

The protein belongs to the conotoxin O1 superfamily. As to expression, expressed by the venom duct.

The protein localises to the secreted. Functionally, produces no obvious effect on ionic currents when tested on the mouse dorsal rooted ganglia (DRG). The sequence is that of Conotoxin MaIr94 from Conus marmoreus (Marble cone).